Here is a 493-residue protein sequence, read N- to C-terminus: Glutamyl-tRNA(Gln) amidotransferase subunit A (493 aa).

Catalysis depends on charge relay system residues lysine 79 and serine 159. Serine 183 acts as the Acyl-ester intermediate in catalysis.

Belongs to the amidase family. GatA subfamily. In terms of assembly, heterotrimer of A, B and C subunits.

It carries out the reaction L-glutamyl-tRNA(Gln) + L-glutamine + ATP + H2O = L-glutaminyl-tRNA(Gln) + L-glutamate + ADP + phosphate + H(+). Its function is as follows. Allows the formation of correctly charged Gln-tRNA(Gln) through the transamidation of misacylated Glu-tRNA(Gln) in organisms which lack glutaminyl-tRNA synthetase. The reaction takes place in the presence of glutamine and ATP through an activated gamma-phospho-Glu-tRNA(Gln). This Rhizobium etli (strain ATCC 51251 / DSM 11541 / JCM 21823 / NBRC 15573 / CFN 42) protein is Glutamyl-tRNA(Gln) amidotransferase subunit A.